A 715-amino-acid chain; its full sequence is Putative pentatricopeptide repeat-containing protein At3g23330 (715 aa).

PPR repeat units follow at residues 38 to 68 (SHTSASIVISIYTNLKLLHEALLLFKTLKSP), 69 to 103 (PVLAWKSVIRCFTDQSLFSKALASFVEMRASGRCP), 104 to 138 (DHNVFPSVLKSCTMMMDLRFGESVHGFIVRLGMDC), 139 to 172 (DLYTGNALMNMYAKLLGMGSKISVGNVFDEMPQR), 206 to 240 (DVVSYNTIIAGYAQSGMYEDALRMVREMGTTDLKP), 241 to 275 (DSFTLSSVLPIFSEYVDVIKGKEIHGYVIRKGIDS), 276 to 306 (DVYIGSSLVDMYAKSARIEDSERVFSRLYCR), 307 to 341 (DGISWNSLVAGYVQNGRYNEALRLFRQMVTAKVKP), 342 to 376 (GAVAFSSVIPACAHLATLHLGKQLHGYVLRGGFGS), 377 to 407 (NIFIASALVDMYSKCGNIKAARKIFDRMNVL), 408 to 442 (DEVSWTAIIMGHALHGHGHEAVSLFEEMKRQGVKP), 443 to 473 (NQVAFVAVLTACSHVGLVDEAWGYFNSMTKV), and 479 to 509 (ELEHYAAVADLLGRAGKLEEAYNFISKMCVE). The type E motif stretch occupies residues 514-589 (VWSTLLSSCS…KPACSWIEMK (76 aa)). The interval 590 to 620 (NKTHGFVSGDRSHPSMDKINEFLKAVMEQME) is type E(+) motif. The tract at residues 621-715 (KEGYVADTSG…RGNCSCGDYW (95 aa)) is type DYW motif.

Belongs to the PPR family. PCMP-H subfamily.

In Arabidopsis thaliana (Mouse-ear cress), this protein is Putative pentatricopeptide repeat-containing protein At3g23330 (PCMP-H32).